The following is a 137-amino-acid chain: Large ribosomal subunit protein eL32 (137 aa).

The tract at residues 95 to 137 is disordered; sequence PSAAEIATPVSSRKRIASSPARQADRCSRSRRSKFRPRRLRAS. Residues 123–137 are compositionally biased toward basic residues; that stretch reads RSRRSKFRPRRLRAS.

The protein belongs to the eukaryotic ribosomal protein eL32 family.

This chain is Large ribosomal subunit protein eL32 (rpl32), found in Trichoderma harzianum (Hypocrea lixii).